A 248-amino-acid polypeptide reads, in one-letter code: Anamorsin homolog (248 aa).

The segment at 4–130 is N-terminal SAM-like domain; the sequence is FKGLQKSLYI…ETGSSARLSF (127 aa). Residues 131-161 form a linker region; sequence AKKSPSMNVWKISGDDEELIDEEELLDEEDK. [2Fe-2S] cluster contacts are provided by Cys172, Cys181, Cys184, and Cys186. The fe-S binding site A stretch occupies residues 172–186; sequence CSTTGKRKACKNCSC. [4Fe-4S] cluster is bound by residues Cys209, Cys212, Cys220, and Cys223. Short sequence motifs (cx2C motif) lie at residues 209-212 and 220-223; these read CGNC and CSTC. Residues 209–223 form a fe-S binding site B region; sequence CGNCYLGDAFRCSTC.

The protein belongs to the anamorsin family. Monomer. [2Fe-2S] cluster serves as cofactor. The cofactor is [4Fe-4S] cluster.

The protein localises to the cytoplasm. It is found in the mitochondrion intermembrane space. Its function is as follows. Component of the cytosolic iron-sulfur (Fe-S) protein assembly (CIA) machinery. Required for the maturation of extramitochondrial Fe-S proteins. Part of an electron transfer chain functioning in an early step of cytosolic Fe-S biogenesis, facilitating the de novo assembly of a [4Fe-4S] cluster on the cytosolic Fe-S scaffold complex. Electrons are transferred from NADPH via a FAD- and FMN-containing diflavin oxidoreductase. Together with the diflavin oxidoreductase, also required for the assembly of the diferric tyrosyl radical cofactor of ribonucleotide reductase (RNR), probably by providing electrons for reduction during radical cofactor maturation in the catalytic small subunit. In Drosophila mojavensis (Fruit fly), this protein is Anamorsin homolog.